Here is a 489-residue protein sequence, read N- to C-terminus: L-asparagine permease (489 aa).

A run of 12 helical transmembrane segments spans residues 38–58, 62–82, 113–133, 150–170, 175–195, 223–243, 268–288, 302–322, 357–377, 382–402, 426–446, and 452–472; these read HVNM…GAGG, DAGP…FFVV, VAGW…ITAI, VLAL…VKIF, FWFA…GIFL, VMPV…LELV, VALF…SSLY, IGVP…AMSS, YGGI…NYLV, FEIV…IIMI, SPVT…LMWN, and RKTV…WFGV.

This sequence belongs to the amino acid-polyamine-organocation (APC) superfamily. Amino acid transporter (AAT) (TC 2.A.3.1) family.

Its subcellular location is the cell membrane. The sequence is that of L-asparagine permease (ansP) from Streptomyces coelicolor (strain ATCC BAA-471 / A3(2) / M145).